A 740-amino-acid chain; its full sequence is Elongation factor 2 (740 aa).

Residues 23 to 264 (AQIRNAGTLA…MIIEHVPPPN (242 aa)) enclose the tr-type G domain. GTP contacts are provided by residues 32–39 (AHVDHGKT), 98–102 (DTPGH), and 152–155 (NKID). Diphthamide is present on His605.

It belongs to the TRAFAC class translation factor GTPase superfamily. Classic translation factor GTPase family. EF-G/EF-2 subfamily.

It is found in the cytoplasm. Catalyzes the GTP-dependent ribosomal translocation step during translation elongation. During this step, the ribosome changes from the pre-translocational (PRE) to the post-translocational (POST) state as the newly formed A-site-bound peptidyl-tRNA and P-site-bound deacylated tRNA move to the P and E sites, respectively. Catalyzes the coordinated movement of the two tRNA molecules, the mRNA and conformational changes in the ribosome. The polypeptide is Elongation factor 2 (Pyrobaculum calidifontis (strain DSM 21063 / JCM 11548 / VA1)).